An 84-amino-acid chain; its full sequence is ATP synthase subunit c (84 aa).

2 helical membrane-spanning segments follow: residues 13-33 and 56-76; these read IAVGIIFGAAGLGSAIGWGLI and FIFAGLMESFPFIILAFGFWF.

This sequence belongs to the ATPase C chain family. In terms of assembly, F-type ATPases have 2 components, F(1) - the catalytic core - and F(0) - the membrane proton channel. F(1) has five subunits: alpha(3), beta(3), gamma(1), delta(1), epsilon(1). F(0) has three main subunits: a(1), b(2) and c(10-14). The alpha and beta chains form an alternating ring which encloses part of the gamma chain. F(1) is attached to F(0) by a central stalk formed by the gamma and epsilon chains, while a peripheral stalk is formed by the delta and b chains.

The protein localises to the cell inner membrane. In terms of biological role, f(1)F(0) ATP synthase produces ATP from ADP in the presence of a proton or sodium gradient. F-type ATPases consist of two structural domains, F(1) containing the extramembraneous catalytic core and F(0) containing the membrane proton channel, linked together by a central stalk and a peripheral stalk. During catalysis, ATP synthesis in the catalytic domain of F(1) is coupled via a rotary mechanism of the central stalk subunits to proton translocation. Functionally, key component of the F(0) channel; it plays a direct role in translocation across the membrane. A homomeric c-ring of between 10-14 subunits forms the central stalk rotor element with the F(1) delta and epsilon subunits. The sequence is that of ATP synthase subunit c from Acidithiobacillus ferrooxidans (strain ATCC 23270 / DSM 14882 / CIP 104768 / NCIMB 8455) (Ferrobacillus ferrooxidans (strain ATCC 23270)).